We begin with the raw amino-acid sequence, 250 residues long: F-box only protein 17 (250 aa).

The 48-residue stretch at 15–62 folds into the F-box domain; it reads HMALAELPPELLLQVLSHVPPRALVTRCRPVCRAWRDLVDGPSVWLLQ. The FBA domain occupies 99–250; sequence FCLLAPLGRN…GLLQGLSRLH (152 aa).

In terms of assembly, part of a SCF (SKP1-cullin-F-box) protein ligase complex. Interacts with SKP1 and CUL1.

Substrate-recognition component of the SCF (SKP1-CUL1-F-box protein)-type E3 ubiquitin ligase complex. Able to recognize and bind denatured glycoproteins, which are modified with complex-type oligosaccharides. Also recognizes sulfated glycans. Does not bind high-mannose glycoproteins. The chain is F-box only protein 17 (Fbxo17) from Rattus norvegicus (Rat).